The following is a 172-amino-acid chain: Regulator of hemoglobinization and erythroid cell expansion protein (172 aa).

Residues 9 to 29 form a helical membrane-spanning segment; sequence WHGLVIAVVSLFLQACFLTAI. The tract at residues 52-106 is disordered; it reads VPRPSPGHHHPPAVKEMKETQTERDIPMSDSLYRHDSDTPSDSLDSSCSSPPACQ. Basic and acidic residues predominate over residues 64-89; sequence AVKEMKETQTERDIPMSDSLYRHDSD. A compositionally biased stretch (low complexity) spans 91-103; the sequence is PSDSLDSSCSSPP. Y132 and Y141 each carry phosphotyrosine.

Interacts with EPOR; this interaction occurs in a erythropoietin (EPO)-dependent manner. Interacts with JAK2; this interaction occurs in a erythropoietin (EPO)-dependent manner. Interacts (via tyrosine-phosphorylated form) with GRB2. Post-translationally, phosphorylated. Phosphorylation on Tyr-132 and Tyr-141 occurs in a erythropoietin (EPO)-dependent manner. In terms of tissue distribution, expressed in the proerythroblasts (at protein level). Expressed strongly in the kidney. Expressed weakly in the pancreas, liver and lung. Expressed strongly in erythroid progenitor cells (EPCs). Expressed weakly in T-cells and neutrophils.

It localises to the cell membrane. Acts as a signaling transduction factor of the EPO-EPOR signaling pathway promoting erythroid cell differentiation. The protein is Regulator of hemoglobinization and erythroid cell expansion protein of Homo sapiens (Human).